Here is an 837-residue protein sequence, read N- to C-terminus: Protein translocase subunit SecA (837 aa).

ATP contacts are provided by residues Gln-87, 105–109 (GEGKT), and Asp-494. The disordered stretch occupies residues 788–837 (HKESKSDLEYSDSENTETKKKPKRRSEPKVGRNDPCPCGSGKKYKKCCGK). Residues Cys-823, Cys-825, Cys-834, and Cys-835 each coordinate Zn(2+).

The protein belongs to the SecA family. As to quaternary structure, monomer and homodimer. Part of the essential Sec protein translocation apparatus which comprises SecA, SecYEG and auxiliary proteins SecDF-YajC and YidC. Zn(2+) serves as cofactor.

Its subcellular location is the cell inner membrane. The protein localises to the cytoplasm. It carries out the reaction ATP + H2O + cellular proteinSide 1 = ADP + phosphate + cellular proteinSide 2.. In terms of biological role, part of the Sec protein translocase complex. Interacts with the SecYEG preprotein conducting channel. Has a central role in coupling the hydrolysis of ATP to the transfer of proteins into and across the cell membrane, serving as an ATP-driven molecular motor driving the stepwise translocation of polypeptide chains across the membrane. This Maridesulfovibrio salexigens (strain ATCC 14822 / DSM 2638 / NCIMB 8403 / VKM B-1763) (Desulfovibrio salexigens) protein is Protein translocase subunit SecA.